A 249-amino-acid polypeptide reads, in one-letter code: Nodulation protein H (249 aa).

In terms of biological role, required for the formation of sulfated nod factor. Proposed to transfer activated sulfate (PAPS) to a N-acetylglucosamine of the nod factor. The sequence is that of Nodulation protein H (nodH) from Rhizobium tropici.